We begin with the raw amino-acid sequence, 488 residues long: BRAP2 RING ZnF UBP domain-containing protein 1 (488 aa).

An RING-type; degenerate zinc finger spans residues 174–214 (CPICLERLDPDTSGIVSTLCDHSFQCSCTSKWTYLSCQVCR). The UBP-type; degenerate zinc-finger motif lies at 208 to 301 (LSCQVCRLCQ…GKSVEMSTSC (94 aa)). Positions 225, 228, 237, 240, 245, 252, 256, and 262 each coordinate Zn(2+). Residues 370–418 (EQIVVNTMQELQNKIEKCEEEKSGITEVNTKLIKEQDTWRKKAKEIEER) adopt a coiled-coil conformation. Positions 453–488 (MSSDTDGIREGTVLPVPISPEPVSSVRRQKKSNRRK) are disordered. Residues 465–478 (VLPVPISPEPVSSV) show a composition bias toward low complexity. Positions 479–488 (RRQKKSNRRK) are enriched in basic residues.

In terms of assembly, component of the heteromeric E3 ligase complex made of BRIZ1 and BRIZ2. Forms heterooligomers with BRIZ2 via coiled-coil domains.

It catalyses the reaction S-ubiquitinyl-[E2 ubiquitin-conjugating enzyme]-L-cysteine + [acceptor protein]-L-lysine = [E2 ubiquitin-conjugating enzyme]-L-cysteine + N(6)-ubiquitinyl-[acceptor protein]-L-lysine.. The protein operates within protein modification; protein ubiquitination. RING-type ubiquitin E3 ligase required for seed germination and post-germination growth. This chain is BRAP2 RING ZnF UBP domain-containing protein 1, found in Arabidopsis thaliana (Mouse-ear cress).